A 137-amino-acid polypeptide reads, in one-letter code: Large-conductance mechanosensitive channel (137 aa).

The next 2 membrane-spanning stretches (helical) occupy residues phenylalanine 10 to glycine 30 and glycine 76 to isoleucine 96.

The protein belongs to the MscL family. In terms of assembly, homopentamer.

The protein localises to the cell inner membrane. Functionally, channel that opens in response to stretch forces in the membrane lipid bilayer. May participate in the regulation of osmotic pressure changes within the cell. The protein is Large-conductance mechanosensitive channel of Salmonella choleraesuis (strain SC-B67).